A 365-amino-acid polypeptide reads, in one-letter code: Phospho-N-acetylmuramoyl-pentapeptide-transferase (365 aa).

10 helical membrane passes run 22–42, 74–94, 95–115, 134–154, 168–188, 201–221, 240–260, 267–287, 292–312, and 342–362; these read YISVRIIMISITSLLITLALG, TMGGVLILSSVIISCLLWGNL, TSIYLWILILVVIFFGAIGFF, KFALQSIFSIVLAIVLFYLLS, SLYIPMGIVIFVVLAFFIING, GLAIVPVVLVAAGLGIYAYIE, LAEVAVFCAAVCGSGLAFLWF, VFMGDVGSLTLGAVLGVIAVM, LIFFIMGLLFVVEALSVMLQV, and KVVIRFWIISLILFLIGFAAI.

Belongs to the glycosyltransferase 4 family. MraY subfamily. Requires Mg(2+) as cofactor.

The protein resides in the cell inner membrane. The enzyme catalyses UDP-N-acetyl-alpha-D-muramoyl-L-alanyl-gamma-D-glutamyl-meso-2,6-diaminopimeloyl-D-alanyl-D-alanine + di-trans,octa-cis-undecaprenyl phosphate = di-trans,octa-cis-undecaprenyl diphospho-N-acetyl-alpha-D-muramoyl-L-alanyl-D-glutamyl-meso-2,6-diaminopimeloyl-D-alanyl-D-alanine + UMP. It functions in the pathway cell wall biogenesis; peptidoglycan biosynthesis. Its function is as follows. Catalyzes the initial step of the lipid cycle reactions in the biosynthesis of the cell wall peptidoglycan: transfers peptidoglycan precursor phospho-MurNAc-pentapeptide from UDP-MurNAc-pentapeptide onto the lipid carrier undecaprenyl phosphate, yielding undecaprenyl-pyrophosphoryl-MurNAc-pentapeptide, known as lipid I. This is Phospho-N-acetylmuramoyl-pentapeptide-transferase from Francisella tularensis subsp. holarctica (strain OSU18).